The primary structure comprises 757 residues: Probable inorganic carbon transporter subunit DabA (757 aa).

Zn(2+)-binding residues include Cys-321, Asp-323, His-475, and Cys-490.

This sequence belongs to the inorganic carbon transporter (TC 9.A.2) DabA family. As to quaternary structure, forms a complex with DabB. It depends on Zn(2+) as a cofactor.

Its subcellular location is the cell inner membrane. Part of an energy-coupled inorganic carbon pump. The sequence is that of Probable inorganic carbon transporter subunit DabA from Idiomarina loihiensis (strain ATCC BAA-735 / DSM 15497 / L2-TR).